The sequence spans 84 residues: Mu-Sparatoxin-Hp1 (84 aa).

The first 20 residues, 1–20 (MKIAIVMTLLLVAFSTASFA), serve as a signal peptide directing secretion. Residues 21–35 (IEPIERAALDLVMAR) constitute a propeptide that is removed on maturation. 3 cysteine pairs are disulfide-bonded: Cys-54/Cys-68, Cys-61/Cys-73, and Cys-67/Cys-78. At Leu-82 the chain carries Leucine amide.

Expressed by the venom gland.

It localises to the secreted. Functionally, weakly nhibits voltage-gated sodium channels Nav1.7/SCN9A. High concentration of the toxin (3 uM) inhibits Nav1.7/SCN9A currents by 79%. In Heteropoda pingtungensis (Pingtung huntsman spider), this protein is Mu-Sparatoxin-Hp1.